A 494-amino-acid chain; its full sequence is Rho GTPase-activating protein 19 (494 aa).

An N-acetylalanine modification is found at alanine 2. Phosphoserine is present on residues serine 7 and serine 31. Positions 102–308 constitute a Rho-GAP domain; sequence MSLKRKEKGV…FMIKHSQKLF (207 aa). The interval 399–451 is disordered; that stretch reads QSLTQTPGREPSTPRVQKRARSRSFSGLIKRKVLGSQMTSEKKNSSPAPESVA. A phosphoserine mark is found at serine 422, serine 438, and serine 470. A Phosphothreonine modification is found at threonine 478.

Functionally, GTPase activator for the Rho-type GTPases by converting them to an inactive GDP-bound state. The polypeptide is Rho GTPase-activating protein 19 (Arhgap19) (Mus musculus (Mouse)).